The chain runs to 94 residues: PTS system galactitol-specific EIIB component (94 aa).

The 94-residue stretch at 1–94 folds into the PTS EIIB type-2 domain; it reads MKRKIIVACG…QNKILTILQG (94 aa). The active-site Phosphocysteine intermediate; for EIIB activity is Cys9. Residue Cys9 is modified to Phosphocysteine; by EIIA.

Forms a complex with one each of subunit of GatA, GatB and 2 subunits of GatC.

It localises to the cytoplasm. It catalyses the reaction galactitol(out) + N(pros)-phospho-L-histidyl-[protein] = galactitol 1-phosphate(in) + L-histidyl-[protein]. Functionally, the phosphoenolpyruvate-dependent sugar phosphotransferase system (PTS), a major carbohydrate active transport system, catalyzes the phosphorylation of incoming sugar substrates concomitant with their translocation across the cell membrane. The enzyme II complex composed of GatA, GatB and GatC is involved in galactitol transport. The sequence is that of PTS system galactitol-specific EIIB component (gatB) from Escherichia coli O157:H7.